We begin with the raw amino-acid sequence, 396 residues long: Flavohemoprotein (396 aa).

A Globin domain is found at 1 to 136 (MLDNQTIATV…LADIFINREE (136 aa)). Residue histidine 85 coordinates heme b. Active-site charge relay system residues include tyrosine 95 and glutamate 135. The interval 147-396 (GGWRGLRPFR…YECFGPHKVI (250 aa)) is reductase. In terms of domain architecture, FAD-binding FR-type spans 150 to 255 (RGLRPFRINR…TAPRGDFFLD (106 aa)). Residues tyrosine 188 and 204-207 (RQYS) each bind FAD. 268–273 (GVGLTP) lines the NADP(+) pocket. 389–392 (CFGP) lines the FAD pocket.

Belongs to the globin family. Two-domain flavohemoproteins subfamily. This sequence in the C-terminal section; belongs to the flavoprotein pyridine nucleotide cytochrome reductase family. It depends on heme b as a cofactor. FAD serves as cofactor.

It catalyses the reaction 2 nitric oxide + NADPH + 2 O2 = 2 nitrate + NADP(+) + H(+). The catalysed reaction is 2 nitric oxide + NADH + 2 O2 = 2 nitrate + NAD(+) + H(+). In terms of biological role, is involved in NO detoxification in an aerobic process, termed nitric oxide dioxygenase (NOD) reaction that utilizes O(2) and NAD(P)H to convert NO to nitrate, which protects the bacterium from various noxious nitrogen compounds. Therefore, plays a central role in the inducible response to nitrosative stress. In Photorhabdus laumondii subsp. laumondii (strain DSM 15139 / CIP 105565 / TT01) (Photorhabdus luminescens subsp. laumondii), this protein is Flavohemoprotein.